A 430-amino-acid polypeptide reads, in one-letter code: Cell wall protein ECM33 (430 aa).

An N-terminal signal peptide occupies residues 1–19 (MQFKNALTATAILSASALA). Asn-22, Asn-57, Asn-83, Asn-197, Asn-210, Asn-228, Asn-235, Asn-242, Asn-268, Asn-280, Asn-305, and Asn-329 each carry an N-linked (GlcNAc...) asparagine glycan. Position 340 is a phosphoserine (Ser-340). Positions 362–402 (LSSTSTESSKSSATSSASSSGDASNAQASVSASASSSSSSS) are enriched in low complexity. The disordered stretch occupies residues 362 to 411 (LSSTSTESSKSSATSSASSSGDASNAQASVSASASSSSSSSKKSKGAAPE). Gly-407 carries GPI-anchor amidated glycine lipidation. A propeptide spans 408-430 (AAPELVPATSFMGVVAAVAVALL) (removed in mature form).

It belongs to the SPS2 family. The GPI-anchor is attached to the protein in the endoplasmic reticulum and serves to target the protein to the cell surface. There, the glucosamine-inositol phospholipid moiety is cleaved off and the GPI-modified mannoprotein is covalently attached via its lipidless GPI glycan remnant to the 1,6-beta-glucan of the outer cell wall layer.

It localises to the cell membrane. The protein resides in the secreted. It is found in the cell wall. In terms of biological role, required for proper cell wall integrity and for the correct assembly of the mannoprotein outer layer of the cell wall. Important for apical bud growth. The polypeptide is Cell wall protein ECM33 (ECM33) (Saccharomyces cerevisiae (strain JAY291) (Baker's yeast)).